The following is a 194-amino-acid chain: DNA replication complex GINS protein PSF3 (194 aa).

It belongs to the GINS3/PSF3 family. In terms of assembly, component of the GINS complex which is a heterotetramer of SLD5, PSF1, PSF2 and PSF3.

Its subcellular location is the nucleus. Functions as part of the GINS complex which plays an essential role in the initiation of DNA replication by binding to DNA replication origins and facilitating the assembly of the DNA replication machinery. The chain is DNA replication complex GINS protein PSF3 from Saccharomyces cerevisiae (strain ATCC 204508 / S288c) (Baker's yeast).